We begin with the raw amino-acid sequence, 225 residues long: Protein ZW2 (225 aa).

One can recognise a DOG1 domain in the interval 7–225 (SETFASFFND…FYLRLRDLGV (219 aa)).

Its function is as follows. May be involved in the regulation of abscisic acid (ABA) sensitivity. This chain is Protein ZW2, found in Arabidopsis thaliana (Mouse-ear cress).